Reading from the N-terminus, the 153-residue chain is Methylglyoxal synthase (153 aa).

The MGS-like domain occupies 6–153; sequence RTIAARKHIA…QRYLAERLPS (148 aa). Substrate is bound by residues His19, Lys23, 45–48, and 65–66; these read TGTT and SG. Asp71 (proton donor/acceptor) is an active-site residue. His98 contributes to the substrate binding site.

This sequence belongs to the methylglyoxal synthase family.

The catalysed reaction is dihydroxyacetone phosphate = methylglyoxal + phosphate. Catalyzes the formation of methylglyoxal from dihydroxyacetone phosphate. The polypeptide is Methylglyoxal synthase (Sodalis glossinidius (strain morsitans)).